A 283-amino-acid polypeptide reads, in one-letter code: Short-chain dehydrogenase cctT (283 aa).

Residues 1-20 (MLKTVLITGCSHGGLGAAMA) form the signal peptide. NADP(+) is bound by residues Ile7, Thr33, Lys39, Glu55, and Asn83. A glycan (N-linked (GlcNAc...) asparagine) is linked at Asn131. Ser133 serves as the catalytic Proton donor. NADP(+) contacts are provided by Tyr147, Arg151, Val180, and Thr182. Catalysis depends on Tyr147, which acts as the Proton acceptor.

This sequence belongs to the short-chain dehydrogenases/reductases (SDR) family.

Functionally, short-chain dehydrogenase; part of the gene cluster that mediates the biosynthesis of the mycotoxin cyclochlorotine, a hepatotoxic and carcinogenic cyclic chlorinated pentapeptide. The function of cctT within the pathway, if any, remains undetermined. The NRPS cctN initially catalyzes the condensation of L-serine (Ser), Pro, L-2-aminobutyrate (2Abu), Ser, and beta-Phe in this order to produce isocyclotine. After the dichlorination of Pro2 catalyzed by cctP2 to produce isocyclochlorotine, the cctO-mediated transacylation of isocyclochlorotine can furnish cyclochlorotine. The subsequent hydroxylation of cyclochlorotine by cctR yields hydroxycyclochlorotine as the final product. CctP1 probably acts as a phenylalanine aminomutase and provides the uncommon building block beta-Phe. Furthermore, 2Abu can be synthesized from threonine by one of the threonine dehydratases and transaminases localized outside of the cluster. The functions of the remaining proteins encoded by the cluster, cctM and cctT, have not been identified yet. The sequence is that of Short-chain dehydrogenase cctT from Talaromyces islandicus (Penicillium islandicum).